The following is a 284-amino-acid chain: Tropomyosin beta chain (284 aa).

Met-1 bears the N-acetylmethionine mark. The tract at residues 1–65 (MDAIKKKMQM…EVEKYSESVK (65 aa)) is disordered. The stretch at 1–284 (MDAIKKKMQM…DNALNDITSL (284 aa)) forms a coiled coil. Composition is skewed to basic and acidic residues over residues 12-40 (KLDK…KQLE) and 51-65 (KGTE…ESVK). Thr-53 carries the post-translational modification Phosphothreonine. The residue at position 61 (Ser-61) is a Phosphoserine; by PIK3CG. Thr-79 carries the phosphothreonine modification. Position 87 is a phosphoserine (Ser-87). Thr-108 carries the phosphothreonine modification. The disordered stretch occupies residues 117–136 (EKAADESERGMKVIENRAMK). Phosphoserine occurs at positions 158, 206, and 215. Position 252 is a phosphothreonine (Thr-252). At Tyr-261 the chain carries Phosphotyrosine. Phosphoserine is present on Ser-271. Phosphothreonine is present on Thr-282. Ser-283 carries the phosphoserine modification.

The protein belongs to the tropomyosin family. As to quaternary structure, homodimer. Heterodimer of an alpha (TPM1, TPM3 or TPM4) and a beta (TPM2) chain. In terms of processing, phosphorylated on Ser-61 by PIK3CG. Phosphorylation on Ser-61 is required for ADRB2 internalization. Present in primary breast cancer tissue, absent from normal breast tissue.

Its subcellular location is the cytoplasm. The protein localises to the cytoskeleton. Its function is as follows. Binds to actin filaments in muscle and non-muscle cells. Plays a central role, in association with the troponin complex, in the calcium dependent regulation of vertebrate striated muscle contraction. Smooth muscle contraction is regulated by interaction with caldesmon. In non-muscle cells is implicated in stabilizing cytoskeleton actin filaments. The non-muscle isoform may have a role in agonist-mediated receptor internalization. This is Tropomyosin beta chain (TPM2) from Homo sapiens (Human).